The primary structure comprises 189 residues: HGPRTase-like protein (189 aa).

This sequence belongs to the purine/pyrimidine phosphoribosyltransferase family. Archaeal HPRT subfamily.

May catalyze a purine salvage reaction, the substrate is unknown. The chain is HGPRTase-like protein from Halorhabdus utahensis (strain DSM 12940 / JCM 11049 / AX-2).